Reading from the N-terminus, the 132-residue chain is Small ribosomal subunit protein uS9 (132 aa).

This sequence belongs to the universal ribosomal protein uS9 family.

This is Small ribosomal subunit protein uS9 (rpsI) from Mycoplasma genitalium (strain ATCC 33530 / DSM 19775 / NCTC 10195 / G37) (Mycoplasmoides genitalium).